Here is a 38-residue protein sequence, read N- to C-terminus: Toxin CSTX-16 (38 aa).

Glutamine amide is present on residues glutamine 19 and glutamine 38.

It belongs to the cationic peptide 04 (cupiennin) family. 10 (double chain) subfamily. In terms of tissue distribution, expressed by the venom gland.

The protein localises to the secreted. The chain is Toxin CSTX-16 from Cupiennius salei (American wandering spider).